Here is a 619-residue protein sequence, read N- to C-terminus: MQLSEGLAAHGTRRAGKWKRTQVPLLGEECADMDLARKEFLLGNGLAAGKMNISIDLDTNYAELVLNVGRVTLGENNRRKMKDSQLRKQQNENVSRAVCALLNSGGGFIKAEVENEDYSYKKDGIGLDLENSFSNMLPFVPNFLDFMQNGNYFHIFVKSWSLETSGPQIATLSSSLYKRDVTSAKVMNASAALEFLKDMEKTGGRAYLRPESPAKRACVDVQEESNMEALAADFFNRTELNYKEKLTFTESTHVEIKNFATEKLLQRITEILPQYVSAFANTDGGYLFVGLNEDKEIIGFKAEKSYLTKLEEVTKNSIGKLPVHHFCVEKGTINYLCKSLGVYDKGRLCGYVYALRVERFCCAVFAKKPDSWHVKDNRVKQLTEKEWIQFMVDSESVCEELPSPASTSSPVSQSCPLCEYINFKIQPLRYHLPGLSEKITFAPKTLCRNLFSQHEGLKQLICEEMGSVSKGSLIFSRSWSLDLGLQENHKVLCDALLISQDKPPVLYTFHMVQDEEFKGYSTQTAQTLKQKLAKIGGYTKKVCVMTKIFYLSPEGKTSCQYDLNSQVIYPESYYWTTAQTMKDLEKALSNILPKENQIFLFVCLFRFCLFVCLFVFFLR.

The chain crosses the membrane as a helical span at residues 598–618 (IFLFVCLFRFCLFVCLFVFFL).

Belongs to the Schlafen family.

The protein resides in the membrane. The polypeptide is Schlafen family member 12-like (SLFN12L) (Pongo abelii (Sumatran orangutan)).